The primary structure comprises 365 residues: Phosphatidylcholine:ceramide cholinephosphotransferase 4 (365 aa).

Topologically, residues 1 to 44 (MISYPFFSLSPPGLVPPPMAVPPVEMYSGSFWNRMRKPLPLRTQ) are cytoplasmic. A helical membrane pass occupies residues 45–65 (VIRFTVVFVIVSFILAVALQI). Residues 66–92 (THERMPDPKVTKPLPDLGFELLTKVPG) lie on the Lumenal side of the membrane. A helical transmembrane segment spans residues 93-113 (MYVLADCCIGFLNILSVFTAF). Residues 114–165 (KLYLLHRHCVGSGEPELPCNIPGVSRFFLSVWLCKENCRIELRNIHTIAWIR) lie on the Cytoplasmic side of the membrane. A helical transmembrane segment spans residues 166 to 186 (FITSYALLLLFRSAVIVMTSL). At 187–229 (PAPDDLCQDPPKIENPVKNVILTVLTAGGGSIHCGDLMYSGHT) the chain is on the lumenal side. Residue H228 is part of the active site. A helical transmembrane segment spans residues 230-250 (VILTLHLMFHWIYGAMVHWSF). Residue R251 is a topological domain, cytoplasmic. The chain crosses the membrane as a helical span at residues 252–272 (PVVTVVAIFGYYCIVASRFHY). Residues H271 and D275 contribute to the active site. Residues 273-275 (TDD) lie on the Lumenal side of the membrane. The helical transmembrane segment at 276–296 (VLVAIYLTIATFIAVGHNADG) threads the bilayer. At 297–365 (APWQLQLFIR…SLMFKCGAYV (69 aa)) the chain is on the cytoplasmic side.

It belongs to the sphingomyelin synthase family.

It is found in the golgi apparatus membrane. It catalyses the reaction an N-acylsphing-4-enine + a 1,2-diacyl-sn-glycero-3-phosphocholine = a sphingomyelin + a 1,2-diacyl-sn-glycerol. It carries out the reaction an N-acylsphinganine + a 1,2-diacyl-sn-glycero-3-phosphocholine = an N-acylsphinganine-1-phosphocholine + a 1,2-diacyl-sn-glycerol. The enzyme catalyses an N-acylsphing-4-enine + a 1,2-diacyl-sn-glycero-3-phosphoethanolamine = an N-acylsphing-4-enine 1-phosphoethanolamine + a 1,2-diacyl-sn-glycerol. The catalysed reaction is an N-acylsphinganine + a 1,2-diacyl-sn-glycero-3-phosphoethanolamine = an N-acylsphinganine-1-phosphoethanolamine + a 1,2-diacyl-sn-glycerol. It catalyses the reaction a 1,2-diacyl-sn-glycero-3-phospho-(1D-myo-inositol) + an N-acylsphing-4-enine = an N-acylsphing-4-enine-(1D-myo-inositol) + a 1,2-diacyl-sn-glycerol. It carries out the reaction an N-acylsphinganine + a 1,2-diacyl-sn-glycero-3-phospho-(1D-myo-inositol) = an N-acylsphinganine-(1D-myo-inositol) + a 1,2-diacyl-sn-glycerol. Bifunctional sphingomyelin (SM)/ethanolamine phosphorylceramide (EPC) synthase with minimal inositol phosphorylceramide (IPC) synthase activity. Specificity is likely to be defined by residues in the lumenal catalytic domain that interact with the polar head groups of the phospholipid donors. SM is synthesized by both stages of the parasite life cycle, bloodstream forms (BSF) and procyclic forms (PCF), by transferring the phosphoryl headgroup from a 1,2-diacyl-sn-glycero-3-phosphocholine to an N-acylsphing-4-enine (ceramide) or an N-acylsphinganine (dihydroceramide) with release of 1,2-diacyl-sn-glycerol. Also catalyzes the reverse reaction, production of ceramide from sphingomyelin. EPC is synthesized by transferring phosphoethanolamine from a 1,2-diacyl-sn-glycero-3-phosphoethanolamine to ceramide or dihydroceramide by BSF and PCF, while IPC is confined to PCF. The ceramide/dihydroceramide ratios are skewed towards dihydroceramide in PCF parasites and ceramide in BSF parasites, this is likely due to differential expression and/or regulation of dihydroceramide desaturase, the enzyme responsible for converting dihydroceramide to ceramide. This is Phosphatidylcholine:ceramide cholinephosphotransferase 4 from Trypanosoma brucei brucei.